We begin with the raw amino-acid sequence, 102 residues long: Large ribosomal subunit protein bL21 (102 aa).

Belongs to the bacterial ribosomal protein bL21 family. As to quaternary structure, part of the 50S ribosomal subunit. Contacts protein L20.

In terms of biological role, this protein binds to 23S rRNA in the presence of protein L20. The sequence is that of Large ribosomal subunit protein bL21 from Neisseria meningitidis serogroup A / serotype 4A (strain DSM 15465 / Z2491).